We begin with the raw amino-acid sequence, 1192 residues long: MGKKVHNAKARQNPQTIVDNSAVKKIQIDVDAVAGGNQVGYDEANALVLPSEKRATKIKVDKVQHVKILSKKQRKHLQAIVDKKKKKEGRAQLLGDLAAVQIPEEELQQYTSISQVQTVGLKRLPTLDEYLAKKKERQAQVLAEKSSASGLRVNAIKGSKRKLLVEEEEELQAKRKNPNVISVEEDDEDSSSSDEDDEEAPAQSAPIAIPTPVSIAPPQIAVKPPIKKLKPEPNPPACIHQTVYVPVHRTTEVQNARLRLPILAEEQQVMETINENPIVIVAGETGSGKTTQLPQFLYEAGYAQHKMIGVTEPRRVAAIAMSKRVAHEMNLPESEVSYLIRFEGNVTPATRIKFMTDGVLLKEIETDFLLSKYSVIILDEAHERSVYTDILVGLLSRIVPLRHKRGQPLKLIIMSATLRVSDFTENTRLFKIPPPLLKVEARQFPVTIHFQKRTPDDYVAEAYRKTLKIHNKLPEGGILIFVTGQQEVNQLVRKLRRTFPYHHAPTKDVAKNGKVSEEEKEETIDDAASTVEDPKELEFDMKRVIRNIRKSKKKFLAQMALPKINLDDYKLPGDDTEADMHEQPDEDDEQEGLEEDNDDELGLEDESGMGSGQRQPLWVLPLYSLLSSEKQNRIFLPVPDGCRLCVVSTNVAETSLTIPHIKYVVDCGRQKTRLYDKLTGVSAFVVTYTSKASADQRAGRAGRISAGHCYRLYSSAVYNDCFEDFSQPDIQKKPVEDLMLQMRCMGIDRVVHFPFPSPPDQVQLQAAERRLIVLGALEVAKTENTDLPPAVTRLGHVISRFPVAPRFGKMLALSHQQNLLPYTVCLVAALSVQEVLIETGVQRDEDVAPGANRFHRKRQSWAASGNYQLLGDPMVLLRAVGAAEYAGSQGRLPEFCAANGLRQKAMSEVRKLRVQLTNEINLNVSDVELGVDPELKPPTDAQARFLRQILLAGMGDRVARKVPLADIADKEERRRLKYAYNCADMEEPAFLHVSSVLRQKAPEWVIYQEAYELQNGDSTKMFIRGITAIEPEWLLLYVPLLCNIREVREDPAPRFDKTSGKIFCHVDATFGKSGWELPLGEVEMPLSEKACCYFGMFLLDGEVCSRLADFRSKLKSTPASVIKSWSSMNNKVLRFKRALITKQIHNRQALIDQWNSDPHFLLEEYQNLLYDVALSELTPLWPPVDKKEPQRQ.

A disordered region spans residues glutamate 170–serine 214. A compositionally biased stretch (acidic residues) spans valine 183–alanine 200. The region spanning methionine 270–leucine 436 is the Helicase ATP-binding domain. Glycine 283–threonine 290 lines the ATP pocket. Positions aspartate 379 to histidine 382 match the DEAH box motif. Residues alanine 504–serine 529 form a disordered region. The segment covering proline 505–glutamate 517 has biased composition (basic and acidic residues). A Phosphoserine modification is found at serine 529. Threonine 530 carries the post-translational modification Phosphothreonine. In terms of domain architecture, Helicase C-terminal spans aspartate 540–glycine 746. Over residues aspartate 567 to glutamine 583 the composition is skewed to basic and acidic residues. The tract at residues aspartate 567–glycine 612 is disordered. Residues proline 584–serine 607 show a composition bias toward acidic residues.

The protein belongs to the DEAD box helicase family. DEAH subfamily.

It carries out the reaction ATP + H2O = ADP + phosphate + H(+). This chain is Probable ATP-dependent RNA helicase kurz (kz), found in Drosophila melanogaster (Fruit fly).